The following is a 94-amino-acid chain: Integration host factor subunit beta (94 aa).

It belongs to the bacterial histone-like protein family. In terms of assembly, heterodimer of an alpha and a beta chain.

Functionally, this protein is one of the two subunits of integration host factor, a specific DNA-binding protein that functions in genetic recombination as well as in transcriptional and translational control. The protein is Integration host factor subunit beta of Photorhabdus laumondii subsp. laumondii (strain DSM 15139 / CIP 105565 / TT01) (Photorhabdus luminescens subsp. laumondii).